We begin with the raw amino-acid sequence, 206 residues long: Small ribosomal subunit protein uS4 (206 aa).

An S4 RNA-binding domain is found at 96–156; sequence TRLDNVVYRM…EKSRTQARIK (61 aa).

This sequence belongs to the universal ribosomal protein uS4 family. In terms of assembly, part of the 30S ribosomal subunit. Contacts protein S5. The interaction surface between S4 and S5 is involved in control of translational fidelity.

One of the primary rRNA binding proteins, it binds directly to 16S rRNA where it nucleates assembly of the body of the 30S subunit. In terms of biological role, with S5 and S12 plays an important role in translational accuracy. The polypeptide is Small ribosomal subunit protein uS4 (Shewanella halifaxensis (strain HAW-EB4)).